Here is a 169-residue protein sequence, read N- to C-terminus: uncharacterized protein (169 aa).

Residues leucine 35–leucine 163 enclose the Nudix hydrolase domain. A Nudix box motif is present at residues tyrosine 81–histidine 103. Positions 88 and 92 each coordinate Mg(2+).

This sequence belongs to the Nudix hydrolase family. The cofactor is Mg(2+).

This is an uncharacterized protein from Pseudomonas aeruginosa (strain ATCC 15692 / DSM 22644 / CIP 104116 / JCM 14847 / LMG 12228 / 1C / PRS 101 / PAO1).